The sequence spans 107 residues: Large ribosomal subunit protein uL24 (107 aa).

This sequence belongs to the universal ribosomal protein uL24 family. Part of the 50S ribosomal subunit.

In terms of biological role, one of two assembly initiator proteins, it binds directly to the 5'-end of the 23S rRNA, where it nucleates assembly of the 50S subunit. Functionally, one of the proteins that surrounds the polypeptide exit tunnel on the outside of the subunit. This chain is Large ribosomal subunit protein uL24, found in Mycobacterium ulcerans (strain Agy99).